We begin with the raw amino-acid sequence, 141 residues long: Large ribosomal subunit protein uL11 (141 aa).

Belongs to the universal ribosomal protein uL11 family. In terms of assembly, part of the ribosomal stalk of the 50S ribosomal subunit. Interacts with L10 and the large rRNA to form the base of the stalk. L10 forms an elongated spine to which L12 dimers bind in a sequential fashion forming a multimeric L10(L12)X complex. In terms of processing, one or more lysine residues are methylated.

In terms of biological role, forms part of the ribosomal stalk which helps the ribosome interact with GTP-bound translation factors. In Limosilactobacillus reuteri (strain DSM 20016) (Lactobacillus reuteri), this protein is Large ribosomal subunit protein uL11.